The sequence spans 218 residues: Octanoyltransferase (218 aa).

A BPL/LPL catalytic domain is found at 30-212 (ENTADEIWLV…HFYNILGYNA (183 aa)). Substrate-binding positions include 69–76 (RGGQITYH), 141–143 (SLG), and 154–156 (GLA). C172 (acyl-thioester intermediate) is an active-site residue.

The protein belongs to the LipB family.

The protein localises to the cytoplasm. It carries out the reaction octanoyl-[ACP] + L-lysyl-[protein] = N(6)-octanoyl-L-lysyl-[protein] + holo-[ACP] + H(+). It functions in the pathway protein modification; protein lipoylation via endogenous pathway; protein N(6)-(lipoyl)lysine from octanoyl-[acyl-carrier-protein]: step 1/2. Catalyzes the transfer of endogenously produced octanoic acid from octanoyl-acyl-carrier-protein onto the lipoyl domains of lipoate-dependent enzymes. Lipoyl-ACP can also act as a substrate although octanoyl-ACP is likely to be the physiological substrate. The protein is Octanoyltransferase of Actinobacillus pleuropneumoniae serotype 5b (strain L20).